Consider the following 309-residue polypeptide: Elongation factor Ts (309 aa).

Residues 82–85 form an involved in Mg(2+) ion dislocation from EF-Tu region; it reads TDFV.

The protein belongs to the EF-Ts family.

It localises to the cytoplasm. Functionally, associates with the EF-Tu.GDP complex and induces the exchange of GDP to GTP. It remains bound to the aminoacyl-tRNA.EF-Tu.GTP complex up to the GTP hydrolysis stage on the ribosome. The protein is Elongation factor Ts of Rickettsia felis (strain ATCC VR-1525 / URRWXCal2) (Rickettsia azadi).